Here is a 269-residue protein sequence, read N- to C-terminus: tRNA (guanine-N(1)-)-methyltransferase (269 aa).

Residues glycine 115 and 139–144 (LGDYVL) contribute to the S-adenosyl-L-methionine site.

This sequence belongs to the RNA methyltransferase TrmD family. As to quaternary structure, homodimer.

It localises to the cytoplasm. The enzyme catalyses guanosine(37) in tRNA + S-adenosyl-L-methionine = N(1)-methylguanosine(37) in tRNA + S-adenosyl-L-homocysteine + H(+). Functionally, specifically methylates guanosine-37 in various tRNAs. The sequence is that of tRNA (guanine-N(1)-)-methyltransferase from Pseudarthrobacter chlorophenolicus (strain ATCC 700700 / DSM 12829 / CIP 107037 / JCM 12360 / KCTC 9906 / NCIMB 13794 / A6) (Arthrobacter chlorophenolicus).